The chain runs to 322 residues: Epoxide hydrolase A (322 aa).

The AB hydrolase-1 domain occupies 27–131; sequence PVVILAHGFP…AVAALSVPAL (105 aa). Residue aspartate 103 is the Nucleophile of the active site. The active-site Proton acceptor is histidine 298.

Belongs to the AB hydrolase superfamily. Epoxide hydrolase family. In terms of assembly, homodimer.

It carries out the reaction an epoxide + H2O = an ethanediol. Its function is as follows. Could be involved in detoxification of extraneous host-cell epoxides. Catalyzes the hydrolysis of epoxide-containing substrates. In Mycobacterium tuberculosis (strain ATCC 25618 / H37Rv), this protein is Epoxide hydrolase A (ephA).